Consider the following 474-residue polypeptide: Methylenetetrahydrofolate--tRNA-(uracil-5-)-methyltransferase TrmFO (474 aa).

Gly9–Gly14 is a binding site for FAD.

This sequence belongs to the MnmG family. TrmFO subfamily. FAD is required as a cofactor.

It is found in the cytoplasm. It carries out the reaction uridine(54) in tRNA + (6R)-5,10-methylene-5,6,7,8-tetrahydrofolate + NADH + H(+) = 5-methyluridine(54) in tRNA + (6S)-5,6,7,8-tetrahydrofolate + NAD(+). The catalysed reaction is uridine(54) in tRNA + (6R)-5,10-methylene-5,6,7,8-tetrahydrofolate + NADPH + H(+) = 5-methyluridine(54) in tRNA + (6S)-5,6,7,8-tetrahydrofolate + NADP(+). In terms of biological role, catalyzes the folate-dependent formation of 5-methyl-uridine at position 54 (M-5-U54) in all tRNAs. In Methylorubrum extorquens (strain PA1) (Methylobacterium extorquens), this protein is Methylenetetrahydrofolate--tRNA-(uracil-5-)-methyltransferase TrmFO.